Reading from the N-terminus, the 131-residue chain is Small ribosomal subunit protein uS8 (131 aa).

The protein belongs to the universal ribosomal protein uS8 family. Part of the 30S ribosomal subunit. Contacts proteins S5 and S12.

In terms of biological role, one of the primary rRNA binding proteins, it binds directly to 16S rRNA central domain where it helps coordinate assembly of the platform of the 30S subunit. The protein is Small ribosomal subunit protein uS8 of Pelagibacter ubique (strain HTCC1062).